Reading from the N-terminus, the 178-residue chain is MKRERINPETLELEERVVQINRVSKVVKGGRRFSFSTVVVVGDGKGHVGIGMGKAAEVPDAIRKGAEAAKRNLIRVPLVHATVPHEVVTKFAATKVMLRPAAPGTGVIAGRGVRPVVEAAGIKDLLSKVYGSNNPVNVVKATFKALSEMTSLHEMASRRDMTPQELMERRTRRETEAA.

The 64-residue stretch at 13–76 (LEERVVQINR…EAAKRNLIRV (64 aa)) folds into the S5 DRBM domain. Residues 156–178 (ASRRDMTPQELMERRTRRETEAA) are disordered.

The protein belongs to the universal ribosomal protein uS5 family. In terms of assembly, part of the 30S ribosomal subunit. Contacts proteins S4 and S8.

With S4 and S12 plays an important role in translational accuracy. Its function is as follows. Located at the back of the 30S subunit body where it stabilizes the conformation of the head with respect to the body. The protein is Small ribosomal subunit protein uS5 of Chloroflexus aurantiacus (strain ATCC 29364 / DSM 637 / Y-400-fl).